A 284-amino-acid polypeptide reads, in one-letter code: Bifunctional protein FolD (284 aa).

G166–S168 serves as a coordination point for NADP(+).

The protein belongs to the tetrahydrofolate dehydrogenase/cyclohydrolase family. In terms of assembly, homodimer.

It carries out the reaction (6R)-5,10-methylene-5,6,7,8-tetrahydrofolate + NADP(+) = (6R)-5,10-methenyltetrahydrofolate + NADPH. It catalyses the reaction (6R)-5,10-methenyltetrahydrofolate + H2O = (6R)-10-formyltetrahydrofolate + H(+). It functions in the pathway one-carbon metabolism; tetrahydrofolate interconversion. In terms of biological role, catalyzes the oxidation of 5,10-methylenetetrahydrofolate to 5,10-methenyltetrahydrofolate and then the hydrolysis of 5,10-methenyltetrahydrofolate to 10-formyltetrahydrofolate. This chain is Bifunctional protein FolD, found in Legionella pneumophila subsp. pneumophila (strain Philadelphia 1 / ATCC 33152 / DSM 7513).